The following is a 186-amino-acid chain: Glutathione S-transferase 1, isoform A (186 aa).

One can recognise a GST N-terminal domain in the interval 1–81; that stretch reads MDFYYLPGSA…YLVEKYCAHD (81 aa). Glutathione contacts are provided by residues Ser-9, 50–52, and 65–67; these read HCI and ESR. The GST C-terminal domain occupies 92–186; the sequence is DPRRRAVVHQ…RRCRVRSAAI (95 aa).

The protein belongs to the GST superfamily. Theta family. In terms of assembly, homodimer.

It catalyses the reaction RX + glutathione = an S-substituted glutathione + a halide anion + H(+). Functionally, conjugation of reduced glutathione to a wide number of exogenous and endogenous hydrophobic electrophiles. This Anopheles gambiae (African malaria mosquito) protein is Glutathione S-transferase 1, isoform A.